The chain runs to 472 residues: ATP synthase subunit beta (472 aa).

150–157 (GGAGVGKT) is an ATP binding site.

Belongs to the ATPase alpha/beta chains family. In terms of assembly, F-type ATPases have 2 components, CF(1) - the catalytic core - and CF(0) - the membrane proton channel. CF(1) has five subunits: alpha(3), beta(3), gamma(1), delta(1), epsilon(1). CF(0) has four main subunits: a, b, b' and c.

The protein localises to the cellular chromatophore membrane. The catalysed reaction is ATP + H2O + 4 H(+)(in) = ADP + phosphate + 5 H(+)(out). Its function is as follows. Produces ATP from ADP in the presence of a proton gradient across the membrane. The catalytic sites are hosted primarily by the beta subunits. The protein is ATP synthase subunit beta of Rhodobacter capsulatus (Rhodopseudomonas capsulata).